Consider the following 195-residue polypeptide: Orotate phosphoribosyltransferase (195 aa).

5-phospho-alpha-D-ribose 1-diphosphate-binding positions include R86, K90, H92, and 111-119; that span reads DDVATTGVS. Orotate contacts are provided by T115 and R143.

This sequence belongs to the purine/pyrimidine phosphoribosyltransferase family. PyrE subfamily. In terms of assembly, homodimer. It depends on Mg(2+) as a cofactor.

The catalysed reaction is orotidine 5'-phosphate + diphosphate = orotate + 5-phospho-alpha-D-ribose 1-diphosphate. It functions in the pathway pyrimidine metabolism; UMP biosynthesis via de novo pathway; UMP from orotate: step 1/2. In terms of biological role, catalyzes the transfer of a ribosyl phosphate group from 5-phosphoribose 1-diphosphate to orotate, leading to the formation of orotidine monophosphate (OMP). The chain is Orotate phosphoribosyltransferase from Saccharolobus solfataricus (strain ATCC 35092 / DSM 1617 / JCM 11322 / P2) (Sulfolobus solfataricus).